The primary structure comprises 188 residues: Small acidic protein (188 aa).

Residues 1–188 (MSAREERYQR…KMLFVKSTGS (188 aa)) form a disordered region. The segment covering 49–82 (GKKEHTGRLVIGDHKSTSHFRSGVEDKKISDQLE) has biased composition (basic and acidic residues). The segment covering 83–95 (HQYQQSMDSSMSG) has biased composition (polar residues). The span at 130-152 (SESSNEVSSEEESESESVSEEET) shows a compositional bias: acidic residues. Basic and acidic residues predominate over residues 153–176 (AADKQKPTKPNEKDSFPDSRDGKS).

The protein belongs to the SMAP family.

This chain is Small acidic protein (smap), found in Xenopus laevis (African clawed frog).